The chain runs to 272 residues: uncharacterized protein (272 aa).

The Schiff-base intermediate with substrate role is filled by Lys185.

Belongs to the DeoC/FbaB aldolase family.

This is an uncharacterized protein from Saccharolobus solfataricus (strain ATCC 35092 / DSM 1617 / JCM 11322 / P2) (Sulfolobus solfataricus).